The following is a 264-amino-acid chain: Signal peptidase I (264 aa).

Residues 1 to 18 (MNRDNTKTNKTVKQEFAS) lie on the Cytoplasmic side of the membrane. A helical membrane pass occupies residues 19–39 (FTFVICIALVIRILIMEPFTV). The Periplasmic portion of the chain corresponds to 40 to 264 (PTGSMKATIL…IFKNLYNVDE (225 aa)). Active-site residues include S43 and K106.

It belongs to the peptidase S26 family.

It localises to the cell inner membrane. The enzyme catalyses Cleavage of hydrophobic, N-terminal signal or leader sequences from secreted and periplasmic proteins.. Functionally, complements E.coli mutants temperature-sensitive for LepB function. This Rickettsia typhi (strain ATCC VR-144 / Wilmington) protein is Signal peptidase I (lepB).